We begin with the raw amino-acid sequence, 92 residues long: Small ribosomal subunit protein uS19 (92 aa).

It belongs to the universal ribosomal protein uS19 family.

Its function is as follows. Protein S19 forms a complex with S13 that binds strongly to the 16S ribosomal RNA. The chain is Small ribosomal subunit protein uS19 from Crocosphaera subtropica (strain ATCC 51142 / BH68) (Cyanothece sp. (strain ATCC 51142)).